A 169-amino-acid polypeptide reads, in one-letter code: Probable GPI-anchored adhesin-like protein PGA22 (169 aa).

Positions methionine 1 to alanine 18 are cleaved as a signal peptide. N-linked (GlcNAc...) asparagine glycans are attached at residues asparagine 87, asparagine 104, asparagine 111, and asparagine 118. A lipid anchor (GPI-anchor amidated glycine) is attached at glycine 140. The propeptide at proline 141–leucine 169 is removed in mature form.

It localises to the cell membrane. Putative adhesin which may be involved in cell adhesion and virulence. This is Probable GPI-anchored adhesin-like protein PGA22 (PGA22) from Candida albicans (strain SC5314 / ATCC MYA-2876) (Yeast).